Consider the following 352-residue polypeptide: C-C chemokine receptor type 5 (352 aa).

Residues 1-30 (MDYQVSSPTYDIDYYTSEPCQKINVKQIAA) lie on the Extracellular side of the membrane. Position 3 is a sulfotyrosine (Y3). O-linked (GalNAc...) serine glycans are attached at residues S6 and S7. 3 positions are modified to sulfotyrosine: Y10, Y14, and Y15. Disulfide bonds link C20-C269 and C101-C178. The chain crosses the membrane as a helical span at residues 31–58 (RLLPPLYSLVFIFGFVGNILVVLILINC). The Cytoplasmic portion of the chain corresponds to 59-68 (KRLKSMTDIY). A helical transmembrane segment spans residues 69 to 89 (LLNLAISDLLFLLTVPFWAHY). Residues 90–102 (AAAQWDFGNTMCQ) are Extracellular-facing. The helical transmembrane segment at 103 to 124 (LLTGLYFIGFFSGIFFIILLTI) threads the bilayer. Over 125 to 141 (DRYLAIVHAVFALKART) the chain is Cytoplasmic. A helical transmembrane segment spans residues 142–166 (VTFGVVTSVITWVVAVFASLPRIIF). Residues 167–198 (TRSQREGLHYTCSSHFPYSQYQFWKNFQTLKI) are Extracellular-facing. Residues 199 to 218 (VILGLVLPLLVMVICYSGIL) traverse the membrane as a helical segment. Over 219 to 235 (KTLLRCRNEKKRHRAVR) the chain is Cytoplasmic. The helical transmembrane segment at 236–260 (LIFTIMIVYFLFWAPYNIVLLLNTF) threads the bilayer. The Extracellular portion of the chain corresponds to 261–277 (QEFFGLNNCSSSNRLDQ). The chain crosses the membrane as a helical span at residues 278 to 301 (AMQVTETLGMTHCCINPIIYAFVG). At 302-352 (EKFRNYLLVFFQKHIAKRFCKCCSIFQQEAPERASSVYTRSTGEQETSVGL) the chain is on the cytoplasmic side. Residues C321, C323, and C324 are each lipidated (S-palmitoyl cysteine). S336, S337, S342, and S349 each carry phosphoserine; by BARK1.

Belongs to the G-protein coupled receptor 1 family. As to quaternary structure, interacts with PRAF2. Efficient ligand binding to CCL3/MIP-1alpha and CCL4/MIP-1beta requires sulfation, O-glycosylation and sialic acid modifications. Glycosylation on Ser-6 is required for efficient binding of CCL4. Interacts with GRK2. Interacts with ARRB1 and ARRB2. Interacts with CNIH4. Interacts with S100A4; this interaction stimulates T-lymphocyte chemotaxis. In terms of processing, sulfated on at least 2 of the N-terminal tyrosines. Sulfation is required for efficient binding of the chemokines, CCL3 and CCL4. Post-translationally, palmitoylation in the C-terminal is important for cell surface expression. Phosphorylation on serine residues in the C-terminal is stimulated by binding CC chemokines especially by APO-RANTES. In terms of processing, O-glycosylated, but not N-glycosylated. Ser-6 appears to be the major site even if Ser-7 may be also O-glycosylated. Also sialylated glycans present which contribute to chemokine binding. Thr-16 and Ser-17 may also be glycosylated and, if so, with small moieties such as a T-antigen.

The protein localises to the cell membrane. Functionally, receptor for a number of inflammatory CC-chemokines including CCL3/MIP-1-alpha, CCL4/MIP-1-beta and RANTES and subsequently transduces a signal by increasing the intracellular calcium ion level. May play a role in the control of granulocytic lineage proliferation or differentiation. Participates in T-lymphocyte migration to the infection site by acting as a chemotactic receptor. The chain is C-C chemokine receptor type 5 (CCR5) from Chlorocebus tantalus (Tantalus monkey).